The sequence spans 198 residues: Nucleoid occlusion factor SlmA (198 aa).

Residues 11–71 (PNRKHQILES…GLIDFIEESI (61 aa)) form the HTH tetR-type domain. Residues 34 to 53 (TTAKLAAEVGFSEAALYRHF) constitute a DNA-binding region (H-T-H motif).

Belongs to the nucleoid occlusion factor SlmA family. Homodimer. Interacts with FtsZ.

It localises to the cytoplasm. Its subcellular location is the nucleoid. Functionally, required for nucleoid occlusion (NO) phenomenon, which prevents Z-ring formation and cell division over the nucleoid. Acts as a DNA-associated cell division inhibitor that binds simultaneously chromosomal DNA and FtsZ, and disrupts the assembly of FtsZ polymers. SlmA-DNA-binding sequences (SBS) are dispersed on non-Ter regions of the chromosome, preventing FtsZ polymerization at these regions. This Colwellia psychrerythraea (strain 34H / ATCC BAA-681) (Vibrio psychroerythus) protein is Nucleoid occlusion factor SlmA.